The primary structure comprises 181 residues: ADP-ribosylation factor 1 (181 aa).

The N-myristoyl glycine moiety is linked to residue G2. Residues 24 to 31 (GLDAAGKT), 67 to 71 (DVGGQ), and 126 to 129 (NKQD) each bind GTP.

Belongs to the small GTPase superfamily. Arf family.

It localises to the golgi apparatus. The enzyme catalyses GTP + H2O = GDP + phosphate + H(+). Its function is as follows. GTP-binding protein involved in protein trafficking; may modulate vesicle budding and uncoating within the Golgi apparatus. This chain is ADP-ribosylation factor 1 (ARF1), found in Chlamydomonas reinhardtii (Chlamydomonas smithii).